A 325-amino-acid polypeptide reads, in one-letter code: Hydroxylase/desaturase poxK (325 aa).

Low complexity predominate over residues 1–12 (MTATATPVPTVA). A disordered region spans residues 1 to 25 (MTATATPVPTVASHAQDITLPPPPK).

This sequence belongs to the asaB hydroxylase/desaturase family.

It participates in secondary metabolite biosynthesis. Its function is as follows. Hydroxylase/desaturase; part of the gene cluster that mediates the biosynthesis of oxaleimides, cytotoxic compounds containing an unusual disubstituted succinimide moiety. The first step of the pathway is provided by the HR-PKS poxF that serves in a new mode of collaborative biosynthesis with the PKS-NRPS poxE, by providing the olefin containing amino acid substrate via the synthesis of an ACP-bound dec-4-enoate. The cytochrome P450 monooxygenase poxM-catalyzed oxidation at the alpha-position creates the enzyme-bound 2-hydroxydec-4-enoyl-ACP thioester, which may be prone to spontaneous hydrolysis to yield 2-hydroxydec-4-enoic acid due to increased electrophilicity of the carbonyl. 2-hydroxydec-4-enoic acid can then be further oxidized by poxM to yield the alpha-ketoacid 2-oxodec-4-enoicacid, which is reductively aminated by the aminotransferase poxL to yield (S,E)-2-aminodec-4-enoic acid. The Hybrid PKS-NRPS synthetase poxE then performs condensation between the octaketide product of its PKS modules and the amino group of (S,E)-2-aminodec-4-enoic acid which is activated and incorporated by the adenylation domain. The resulting aminoacyl product can be cyclized by the Diels-Alderase PoxQ and reductively released by the reductive (R) domain of poxE to yield an aldehyde intermediate. The released aldehyde is then substrate for a Knoevenagel condensation by the hydrolyase poxO followed by an oxidation at the 5-position of the pyrrolidone ring. The presence of the olefin from the amino acid building block allows for migration of the substituted allyl group to occur. This allylic transposition reaction takes place in a conjugate addition, semipinacol-like fashion to yield a succinimide intermediate. Iterative two-electron oxidations of the C7 methyl of the succinimide intermediate to the carboxylic acid can be catalyzed by one of two remaining cytochrome P450 monooxygenasess poxC or poxD to yield oxaleimide A. Subsequent oxidation yields the maleimide scaffold oxaleimide I. Both oxaleimide A and oxaleimide I can undergo oxidative modifications in the decalin ring to yield the series of products oxaleimides B to H. The chain is Hydroxylase/desaturase poxK from Penicillium oxalicum (strain 114-2 / CGMCC 5302) (Penicillium decumbens).